The chain runs to 287 residues: MPELPEVETVCRGLNRLTLEQTIGGGEVLLDRSLAYPVSVEDFQKQITGCRLVGWQRRGKYLLGELRSNQAPGPAGWLGCHLRMTGQLLWTERDQQRPRHTRVVLHFEGGWELRFVDTRTFGKVWLLPGDRPWAEVMTGLGQLGPEPFGADFTAEYLYEKLKSSRRPLKNALLDQRLVAGLGNIYADEVLFFCGFHPTMASNQVSLQDCELIHQQIQATLTAAIEAGGTSFSDYRQVTGINGNYGGMAQVYGREGEPCRHCGTVIAKIKLGGRSAHFCPQCQPKLER.

The Schiff-base intermediate with DNA role is filled by Pro-2. The active-site Proton donor is the Glu-3. Lys-60 functions as the Proton donor; for beta-elimination activity in the catalytic mechanism. Positions 100 and 119 each coordinate DNA. An FPG-type zinc finger spans residues 249–283; sequence QVYGREGEPCRHCGTVIAKIKLGGRSAHFCPQCQP. The Proton donor; for delta-elimination activity role is filled by Arg-273.

The protein belongs to the FPG family. As to quaternary structure, monomer. The cofactor is Zn(2+).

The enzyme catalyses Hydrolysis of DNA containing ring-opened 7-methylguanine residues, releasing 2,6-diamino-4-hydroxy-5-(N-methyl)formamidopyrimidine.. It catalyses the reaction 2'-deoxyribonucleotide-(2'-deoxyribose 5'-phosphate)-2'-deoxyribonucleotide-DNA = a 3'-end 2'-deoxyribonucleotide-(2,3-dehydro-2,3-deoxyribose 5'-phosphate)-DNA + a 5'-end 5'-phospho-2'-deoxyribonucleoside-DNA + H(+). Functionally, involved in base excision repair of DNA damaged by oxidation or by mutagenic agents. Acts as a DNA glycosylase that recognizes and removes damaged bases. Has a preference for oxidized purines, such as 7,8-dihydro-8-oxoguanine (8-oxoG). Has AP (apurinic/apyrimidinic) lyase activity and introduces nicks in the DNA strand. Cleaves the DNA backbone by beta-delta elimination to generate a single-strand break at the site of the removed base with both 3'- and 5'-phosphates. The polypeptide is Formamidopyrimidine-DNA glycosylase (mutM) (Synechocystis sp. (strain ATCC 27184 / PCC 6803 / Kazusa)).